Consider the following 235-residue polypeptide: Homeobox protein Nkx-2.8 (235 aa).

Polar residues predominate over residues 51 to 67 (SDESGLETSPADSSQLA). The disordered stretch occupies residues 51 to 86 (SDESGLETSPADSSQLASLRRESPGSDPEKRRKRRV). Residues 69–80 (LRRESPGSDPEK) show a composition bias toward basic and acidic residues. Residues 81 to 140 (RRKRRVLFSKAQTLELERRFRQQRYLSAPEREQLARLLRLTPTQVKIWFQNHRYKLKRGR) constitute a DNA-binding region (homeobox).

It belongs to the NK-2 homeobox family. Prominent expression in ventral brain and neural tube structures.

Its subcellular location is the nucleus. Possible role in the specification of a distinct subset of neurons. This chain is Homeobox protein Nkx-2.8 (Nkx2-8), found in Mus musculus (Mouse).